Here is a 575-residue protein sequence, read N- to C-terminus: MIVKVFDYIYISNVYNANDIYELIKLNIGGVLTCFDCTCIEWCHHNDTNVTNKIFYKDIFVNTKKDLIKCDVPIITNKSVNSDIIGGTHQINNYYNEQNNNYHDNTYKEFTQTHKTNIDPSQIKSDHINEERKEHYDYIIFPSDIINNTQCNNNNLKDYIKSMLILKEDAYIDFDVIHMDQLKNKHNNNNNNNNNNNNNNNNNNNNNNCCTFKNPDISNTSQHHVEHIQIHKSNSHSNIPSDNINFCNKKYDKNLSRSVEISEKDKHPENSLLYEFVNKDKLNYKINQEEDTVSSEKNKLCDNNNNNNMVHTRHIYNVCELNKCLRENKLIPYNNIYKMKHLYLNILDTFDENILKHVNKAHLFIDSVIQKKKNILIHCMAGISRCSSIILSYVSKKNKKGIEYNFNLLKSKYPFAHPNENFYRQLLLYEKMNYTLDGCTDYHNIYKKIKMNRENLEELKILNLKNDKQPIYNFRCKHCNYVLFNDNEIIKHDFKISKIKKNYGNSCTSIFIEKKEWILTENKMKGVLNCPNVNCNIKLGKWSWTGICCSCGYLQIPAFMINSSNVDRMNISKTV.

Residues 185 to 213 (KHNNNNNNNNNNNNNNNNNNNNNNCCTFK) are disordered. A compositionally biased stretch (low complexity) spans 187–208 (NNNNNNNNNNNNNNNNNNNNNN). Positions 283-435 (NYKINQEEDT…LLLYEKMNYT (153 aa)) constitute a Tyrosine-protein phosphatase domain. The Phosphocysteine intermediate role is filled by cysteine 379. 2 residues coordinate Zn(2+): cysteine 476 and cysteine 530.

Belongs to the protein-tyrosine phosphatase family. Non-receptor class dual specificity subfamily. In terms of assembly, interacts with PES. The cofactor is Zn(2+).

The protein localises to the cytoplasm. It localises to the nucleus. The catalysed reaction is O-phospho-L-tyrosyl-[protein] + H2O = L-tyrosyl-[protein] + phosphate. It carries out the reaction O-phospho-L-seryl-[protein] + H2O = L-seryl-[protein] + phosphate. Dual specificity protein phosphatase which dephosphorylates both phosphotyrosine and phosphoserine residues. The protein is Dual specificity protein phosphatase YVH1 of Plasmodium falciparum (isolate 3D7).